Consider the following 734-residue polypeptide: Ribosomal RNA large subunit methyltransferase K/L (734 aa).

The THUMP domain occupies 49–167 (QAYRVCMWSR…KTEHTYCLDL (119 aa)).

Belongs to the methyltransferase superfamily. RlmKL family.

It localises to the cytoplasm. The catalysed reaction is guanosine(2445) in 23S rRNA + S-adenosyl-L-methionine = N(2)-methylguanosine(2445) in 23S rRNA + S-adenosyl-L-homocysteine + H(+). It catalyses the reaction guanosine(2069) in 23S rRNA + S-adenosyl-L-methionine = N(2)-methylguanosine(2069) in 23S rRNA + S-adenosyl-L-homocysteine + H(+). Functionally, specifically methylates the guanine in position 2445 (m2G2445) and the guanine in position 2069 (m7G2069) of 23S rRNA. The sequence is that of Ribosomal RNA large subunit methyltransferase K/L from Acinetobacter baylyi (strain ATCC 33305 / BD413 / ADP1).